Reading from the N-terminus, the 241-residue chain is Phycocyanobilin:ferredoxin oxidoreductase (241 aa).

It belongs to the HY2 family.

The enzyme catalyses (2R,3Z)-phycocyanobilin + 4 oxidized [2Fe-2S]-[ferredoxin] = biliverdin IXalpha + 4 reduced [2Fe-2S]-[ferredoxin] + 4 H(+). Its function is as follows. Catalyzes the four-electron reduction of biliverdin IX-alpha (2-electron reduction at both the A and D rings); the reaction proceeds via an isolatable 2-electron intermediate, 181,182-dihydrobiliverdin. The sequence is that of Phycocyanobilin:ferredoxin oxidoreductase from Prochlorococcus marinus (strain MIT 9215).